A 314-amino-acid polypeptide reads, in one-letter code: GTP cyclohydrolase FolE2 (314 aa).

Residues Asp290–Arg314 are disordered. Positions Ala291–Gln304 are enriched in low complexity. Residues Gln305–Arg314 show a composition bias toward polar residues.

The protein belongs to the GTP cyclohydrolase IV family.

It carries out the reaction GTP + H2O = 7,8-dihydroneopterin 3'-triphosphate + formate + H(+). Its pathway is cofactor biosynthesis; 7,8-dihydroneopterin triphosphate biosynthesis; 7,8-dihydroneopterin triphosphate from GTP: step 1/1. Converts GTP to 7,8-dihydroneopterin triphosphate. The protein is GTP cyclohydrolase FolE2 of Pseudomonas putida (strain ATCC 47054 / DSM 6125 / CFBP 8728 / NCIMB 11950 / KT2440).